Here is a 230-residue protein sequence, read N- to C-terminus: Orotidine 5'-phosphate decarboxylase (230 aa).

Substrate is bound by residues Asp8, Lys32, 59 to 68 (DLKLYDIPNT), Thr118, Arg178, Gln187, Gly207, and Arg208. Lys61 functions as the Proton donor in the catalytic mechanism.

Belongs to the OMP decarboxylase family. Type 1 subfamily. As to quaternary structure, homodimer.

The enzyme catalyses orotidine 5'-phosphate + H(+) = UMP + CO2. It functions in the pathway pyrimidine metabolism; UMP biosynthesis via de novo pathway; UMP from orotate: step 2/2. Its function is as follows. Catalyzes the decarboxylation of orotidine 5'-monophosphate (OMP) to uridine 5'-monophosphate (UMP). This is Orotidine 5'-phosphate decarboxylase from Nautilia profundicola (strain ATCC BAA-1463 / DSM 18972 / AmH).